Reading from the N-terminus, the 93-residue chain is Small ribosomal subunit protein uS19 (93 aa).

The protein belongs to the universal ribosomal protein uS19 family.

Functionally, protein S19 forms a complex with S13 that binds strongly to the 16S ribosomal RNA. This chain is Small ribosomal subunit protein uS19, found in Campylobacter fetus subsp. fetus (strain 82-40).